A 55-amino-acid polypeptide reads, in one-letter code: Large ribosomal subunit protein bL33 (55 aa).

It belongs to the bacterial ribosomal protein bL33 family.

This chain is Large ribosomal subunit protein bL33, found in Caulobacter sp. (strain K31).